The primary structure comprises 129 residues: Glycine cleavage system H protein 2 (129 aa).

The Lipoyl-binding domain occupies 24–105 (SVTVGISDHA…PYVSWFFKLK (82 aa)). The residue at position 65 (Lys-65) is an N6-lipoyllysine.

Belongs to the GcvH family. As to quaternary structure, the glycine cleavage system is composed of four proteins: P, T, L and H. (R)-lipoate is required as a cofactor.

Its function is as follows. The glycine cleavage system catalyzes the degradation of glycine. The H protein shuttles the methylamine group of glycine from the P protein to the T protein. The sequence is that of Glycine cleavage system H protein 2 from Pseudomonas aeruginosa (strain ATCC 15692 / DSM 22644 / CIP 104116 / JCM 14847 / LMG 12228 / 1C / PRS 101 / PAO1).